The following is a 190-amino-acid chain: Endo-1,4-beta-xylanase (190 aa).

The 190-residue stretch at 1-190 (QTIGPGTGYS…SSGSASITVS (190 aa)) folds into the GH11 domain. The active-site Nucleophile is the glutamate 86. Catalysis depends on glutamate 177, which acts as the Proton donor.

The protein belongs to the glycosyl hydrolase 11 (cellulase G) family.

It catalyses the reaction Endohydrolysis of (1-&gt;4)-beta-D-xylosidic linkages in xylans.. It functions in the pathway glycan degradation; xylan degradation. This chain is Endo-1,4-beta-xylanase, found in Trichoderma harzianum (Hypocrea lixii).